Consider the following 350-residue polypeptide: Biotin synthase (350 aa).

Residues 38–256 (NYVQVSTLLS…IAIARIMMPQ (219 aa)) enclose the Radical SAM core domain. [4Fe-4S] cluster is bound by residues cysteine 53, cysteine 57, and cysteine 60. Cysteine 97, cysteine 128, cysteine 188, and arginine 260 together coordinate [2Fe-2S] cluster.

It belongs to the radical SAM superfamily. Biotin synthase family. As to quaternary structure, homodimer. Requires [4Fe-4S] cluster as cofactor. The cofactor is [2Fe-2S] cluster.

The catalysed reaction is (4R,5S)-dethiobiotin + (sulfur carrier)-SH + 2 reduced [2Fe-2S]-[ferredoxin] + 2 S-adenosyl-L-methionine = (sulfur carrier)-H + biotin + 2 5'-deoxyadenosine + 2 L-methionine + 2 oxidized [2Fe-2S]-[ferredoxin]. It functions in the pathway cofactor biosynthesis; biotin biosynthesis; biotin from 7,8-diaminononanoate: step 2/2. Catalyzes the conversion of dethiobiotin (DTB) to biotin by the insertion of a sulfur atom into dethiobiotin via a radical-based mechanism. The protein is Biotin synthase of Vibrio campbellii (strain ATCC BAA-1116).